The following is a 152-amino-acid chain: UPF0756 membrane protein PEPE_1090 (152 aa).

The next 4 helical transmembrane spans lie at 4-24 (WLFL…SLII), 52-72 (WGVT…KIGF), 85-105 (WIAV…VGFL), and 115-135 (LVMG…GPII).

This sequence belongs to the UPF0756 family.

It localises to the cell membrane. The polypeptide is UPF0756 membrane protein PEPE_1090 (Pediococcus pentosaceus (strain ATCC 25745 / CCUG 21536 / LMG 10740 / 183-1w)).